The chain runs to 179 residues: CASP-like protein 1F1 (179 aa).

Residues 1–16 are Cytoplasmic-facing; the sequence is MENVEDKYNSPLKSQK. The helical transmembrane segment at 17–37 threads the bilayer; that stretch reads LFIGAQICLRIVTIGATLAAT. Residues 38 to 65 are Extracellular-facing; the sequence is WIMVTDKQSITFGDFVMVAKYNYSSAFK. The N-linked (GlcNAc...) asparagine glycan is linked to Asn59. The chain crosses the membrane as a helical span at residues 66–86; sequence FFVLANVIACACSVVSLLFLC. Over 87–105 the chain is Cytoplasmic; the sequence is ALGRYSSNPGHVFLLFLHD. Residues 106–126 form a helical membrane-spanning segment; it reads LLMMSLVLAGCSAATAIGFLG. The Extracellular segment spans residues 127-150; sequence KYGNTKSGWMPICDQFGQFCNRGT. A helical membrane pass occupies residues 151–171; the sequence is ISMMLSYLSMVCLLILTVTSA. The Cytoplasmic portion of the chain corresponds to 172–179; sequence NKSRQIHV.

This sequence belongs to the Casparian strip membrane proteins (CASP) family. In terms of assembly, homodimer and heterodimers.

Its subcellular location is the cell membrane. The sequence is that of CASP-like protein 1F1 from Ricinus communis (Castor bean).